The primary structure comprises 404 residues: Protein IQ-DOMAIN 12 (404 aa).

A calmodulin-binding region spans residues 8–25; that stretch reads FGWMKRLFICEAKARAEK. The Nuclear localization signal 1 signature appears at 11–18; that stretch reads MKRLFICE. IQ domains lie at 108–135 and 136–158; these read NVAA…ALVR and LQAI…SSHS. Positions 226–233 match the Nuclear localization signal 2 motif; sequence IKRDRMLK.

This sequence belongs to the IQD family. Binds to multiple calmodulin (CaM) in the presence of Ca(2+) and CaM-like proteins.

Its subcellular location is the nucleus. The protein resides in the cell membrane. Its function is as follows. May be involved in cooperative interactions with calmodulins or calmodulin-like proteins. Recruits calmodulin proteins to microtubules, thus being a potential scaffold in cellular signaling and trafficking. May associate with nucleic acids and regulate gene expression at the transcriptional or post-transcriptional level. This Arabidopsis thaliana (Mouse-ear cress) protein is Protein IQ-DOMAIN 12.